A 500-amino-acid polypeptide reads, in one-letter code: Protein nucleotidyltransferase YdiU (500 aa).

ATP contacts are provided by Gly-96, Gly-98, Arg-99, Lys-119, Asp-131, Gly-132, Arg-182, and Arg-189. Asp-258 (proton acceptor) is an active-site residue. Positions 259 and 268 each coordinate Mg(2+). Asp-268 lines the ATP pocket.

This sequence belongs to the SELO family. Requires Mg(2+) as cofactor. Mn(2+) is required as a cofactor.

It catalyses the reaction L-seryl-[protein] + ATP = 3-O-(5'-adenylyl)-L-seryl-[protein] + diphosphate. It carries out the reaction L-threonyl-[protein] + ATP = 3-O-(5'-adenylyl)-L-threonyl-[protein] + diphosphate. The catalysed reaction is L-tyrosyl-[protein] + ATP = O-(5'-adenylyl)-L-tyrosyl-[protein] + diphosphate. The enzyme catalyses L-histidyl-[protein] + UTP = N(tele)-(5'-uridylyl)-L-histidyl-[protein] + diphosphate. It catalyses the reaction L-seryl-[protein] + UTP = O-(5'-uridylyl)-L-seryl-[protein] + diphosphate. It carries out the reaction L-tyrosyl-[protein] + UTP = O-(5'-uridylyl)-L-tyrosyl-[protein] + diphosphate. Functionally, nucleotidyltransferase involved in the post-translational modification of proteins. It can catalyze the addition of adenosine monophosphate (AMP) or uridine monophosphate (UMP) to a protein, resulting in modifications known as AMPylation and UMPylation. This chain is Protein nucleotidyltransferase YdiU, found in Rhizobium leguminosarum bv. trifolii (strain WSM2304).